A 280-amino-acid chain; its full sequence is MSINLNELVDSLIQSAPPAELKQVSQSLSSLTKGTSTSSTNSLIQDSIEQYAQENIISIDNIIISKYNKDENSSKYIDYVNNKLFNVDWQNQKIIDVESYHDNNNKRGSNYDELIQKLSQYGDDYYPSNFAFTVIPESEDQLRVIIIGQRANHDNFYTGQWKSNYLITEQGIKGNIDLDIHYFEDGNVRLKFNESINSSNNNNNSSTLQSGNLINNASRIVNFINEQENATMVKIIEQFNNLNQKSFKNLRRLLPVTRSKINWGSAIGNYRLGSDVINKK.

It belongs to the F-actin-capping protein alpha subunit family. As to quaternary structure, heterodimer of an alpha and a beta subunit.

The protein resides in the cytoplasm. It localises to the cytoskeleton. In terms of biological role, F-actin-capping proteins bind in a Ca(2+)-independent manner to the fast growing ends of actin filaments (barbed end) thereby blocking the exchange of subunits at these ends. Unlike other capping proteins (such as gelsolin and severin), these proteins do not sever actin filaments. This chain is F-actin-capping protein subunit alpha (CAP01), found in Candida albicans (strain SC5314 / ATCC MYA-2876) (Yeast).